A 406-amino-acid chain; its full sequence is NADH-quinone oxidoreductase subunit D (406 aa).

It belongs to the complex I 49 kDa subunit family. In terms of assembly, NDH-1 is composed of 14 different subunits. Subunits NuoB, C, D, E, F, and G constitute the peripheral sector of the complex.

The protein localises to the cell inner membrane. It catalyses the reaction a quinone + NADH + 5 H(+)(in) = a quinol + NAD(+) + 4 H(+)(out). Functionally, NDH-1 shuttles electrons from NADH, via FMN and iron-sulfur (Fe-S) centers, to quinones in the respiratory chain. The immediate electron acceptor for the enzyme in this species is believed to be ubiquinone. Couples the redox reaction to proton translocation (for every two electrons transferred, four hydrogen ions are translocated across the cytoplasmic membrane), and thus conserves the redox energy in a proton gradient. This Acidiphilium cryptum (strain JF-5) protein is NADH-quinone oxidoreductase subunit D.